Reading from the N-terminus, the 153-residue chain is Facilitator of iron transport 2 (153 aa).

Positions 1–18 (MKFSTIFGATTVMTAVSA) are cleaved as a signal peptide. The interval 73-98 (TEGPDTTSEKSTTKTLTLTNGSGSST) is disordered. Residues 85 to 98 (TKTLTLTNGSGSST) show a composition bias toward low complexity. A glycan (N-linked (GlcNAc...) asparagine) is linked at Asn92. A lipid anchor (GPI-anchor amidated glycine) is attached at Gly130. Positions 131-153 (AAPAAFQGASVGALALGLISYLL) are cleaved as a propeptide — removed in mature form.

Post-translationally, the GPI-anchor is attached to the protein in the endoplasmic reticulum and serves to target the protein to the cell surface. There, the glucosamine-inositol phospholipid moiety is cleaved off and the GPI-modified mannoprotein is covalently attached via its lipidless GPI glycan remnant to the 1,6-beta-glucan of the outer cell wall layer.

It is found in the secreted. It localises to the cell wall. The protein localises to the membrane. In terms of biological role, involved in the uptake of non-siderophore and siderophore sources of iron. Has a role in the retention of iron in the cell wall and periplasmic space. The protein is Facilitator of iron transport 2 (FIT2) of Saccharomyces cerevisiae (strain ATCC 204508 / S288c) (Baker's yeast).